Reading from the N-terminus, the 488-residue chain is Ribulose bisphosphate carboxylase large chain (488 aa).

Substrate-binding residues include Asn127 and Thr177. Lys179 (proton acceptor) is an active-site residue. Lys181 is a binding site for substrate. 3 residues coordinate Mg(2+): Lys205, Asp207, and Glu208. Position 205 is an N6-carboxylysine (Lys205). His297 acts as the Proton acceptor in catalysis. Substrate contacts are provided by Arg298, His330, and Ser382.

Belongs to the RuBisCO large chain family. Type I subfamily. Heterohexadecamer of 8 large chains and 8 small chains. Requires Mg(2+) as cofactor.

It localises to the plastid. It is found in the chloroplast. It catalyses the reaction 2 (2R)-3-phosphoglycerate + 2 H(+) = D-ribulose 1,5-bisphosphate + CO2 + H2O. It carries out the reaction D-ribulose 1,5-bisphosphate + O2 = 2-phosphoglycolate + (2R)-3-phosphoglycerate + 2 H(+). In terms of biological role, ruBisCO catalyzes two reactions: the carboxylation of D-ribulose 1,5-bisphosphate, the primary event in carbon dioxide fixation, as well as the oxidative fragmentation of the pentose substrate in the photorespiration process. Both reactions occur simultaneously and in competition at the same active site. The sequence is that of Ribulose bisphosphate carboxylase large chain from Cyanidioschyzon merolae (strain NIES-3377 / 10D) (Unicellular red alga).